A 648-amino-acid polypeptide reads, in one-letter code: TBC1 domain family member 17 (648 aa).

Residues 218 to 309 form a required for interaction with OPTN region; the sequence is DPYSTTFSSF…PELKNRIFSG (92 aa). Residues 240 to 259 are disordered; it reads PQPEGAASDLPPPPDDEPEP. Residues 310–520 enclose the Rab-GAP TBC domain; the sequence is GLSPSLRREA…RLWEVLWTGL (211 aa). The segment at 594 to 648 is disordered; sequence LAPPAEPHSPSPTASPLPLSPTRAPPTPPPSTDTAPQPDSSLEILPEEEDEGADS. Residues 597-624 are compositionally biased toward pro residues; it reads PAEPHSPSPTASPLPLSPTRAPPTPPPS. Phosphoserine occurs at positions 602 and 604. T606 is subject to Phosphothreonine. S608 bears the Phosphoserine mark. Phosphothreonine is present on T615. Low complexity predominate over residues 625-634; that stretch reads TDTAPQPDSS. The span at 638 to 648 shows a compositional bias: acidic residues; sequence LPEEEDEGADS.

In terms of assembly, interacts with OPTN; this interaction mediates TBC1D17 transient association with Rab8.

The protein localises to the cytoplasmic vesicle. It is found in the autophagosome. The protein resides in the cytoplasm. It localises to the recycling endosome. Probable RAB GTPase-activating protein that inhibits RAB8A/B function. Reduces Rab8 recruitment to tubules emanating from the endocytic recycling compartment (ERC) and inhibits Rab8-mediated endocytic trafficking, such as that of transferrin receptor (TfR). Involved in regulation of autophagy. The polypeptide is TBC1 domain family member 17 (Homo sapiens (Human)).